The sequence spans 404 residues: Cysteine desulfurase IscS (404 aa).

Pyridoxal 5'-phosphate-binding positions include 75–76, asparagine 155, glutamine 183, and 203–205; these read AT and SAH. Position 206 is an N6-(pyridoxal phosphate)lysine (lysine 206). Residue threonine 243 participates in pyridoxal 5'-phosphate binding. Cysteine 328 acts as the Cysteine persulfide intermediate in catalysis. Cysteine 328 serves as a coordination point for [2Fe-2S] cluster.

Belongs to the class-V pyridoxal-phosphate-dependent aminotransferase family. NifS/IscS subfamily. Homodimer. Forms a heterotetramer with IscU, probably interacts with other sulfur acceptors. Pyridoxal 5'-phosphate is required as a cofactor.

It localises to the cytoplasm. It carries out the reaction (sulfur carrier)-H + L-cysteine = (sulfur carrier)-SH + L-alanine. It functions in the pathway cofactor biosynthesis; iron-sulfur cluster biosynthesis. Inhibited by equimolar N-iodoacetyl-N'-(5-sulfo-1-naphthyl)ethylenediamine. Functionally, master enzyme that delivers sulfur to a number of partners involved in Fe-S cluster assembly, tRNA modification or cofactor biosynthesis. Catalyzes the removal of elemental sulfur from cysteine to produce alanine via an enzyme-bound persulfide intermediate. Functions as a sulfur delivery protein for Fe-S cluster synthesis. Cluster assembly on IscU homodimers proceeds sequentially from 1 2Fe-2S per dimer, to 2 2Fe-2S per dimer and finally 1 4Fe-4S per dimer. The sequence is that of Cysteine desulfurase IscS from Azotobacter vinelandii.